The chain runs to 529 residues: GTPase Obg (529 aa).

The 158-residue stretch at 2–159 folds into the Obg domain; sequence PTFVDRVVLH…LDAVLELKTV (158 aa). The segment at 62 to 86 is disordered; the sequence is FHPHQRASRGRPGQGSNRHGADGAD. The OBG-type G domain occupies 160–332; it reads ADVALVGFPS…LSLALADLVA (173 aa). GTP-binding positions include 166–173, 191–195, 213–216, 284–287, and 313–315; these read GFPSAGKS, FTTLV, DVPG, NKID, and STA. 2 residues coordinate Mg(2+): Ser-173 and Thr-193. One can recognise an OCT domain in the interval 350–427; it reads PRAVNEPDFT…IGEVTFDWEP (78 aa). Disordered stretches follow at residues 434-494 and 506-529; these read LGNG…DRLR and ARRA…EEEG. Composition is skewed to low complexity over residues 461–472 and 508–520; these read AGTAASGAAPSP and RAAA…VRGE.

Belongs to the TRAFAC class OBG-HflX-like GTPase superfamily. OBG GTPase family. As to quaternary structure, monomer. The cofactor is Mg(2+).

The protein resides in the cytoplasm. Its function is as follows. An essential GTPase which binds GTP, GDP and possibly (p)ppGpp with moderate affinity, with high nucleotide exchange rates and a fairly low GTP hydrolysis rate. Plays a role in control of the cell cycle, stress response, ribosome biogenesis and in those bacteria that undergo differentiation, in morphogenesis control. The sequence is that of GTPase Obg from Frankia casuarinae (strain DSM 45818 / CECT 9043 / HFP020203 / CcI3).